The chain runs to 429 residues: UDP-N-acetylglucosamine 1-carboxyvinyltransferase (429 aa).

Residue 22-23 (KN) coordinates phosphoenolpyruvate. Residue arginine 102 participates in UDP-N-acetyl-alpha-D-glucosamine binding. Cysteine 126 acts as the Proton donor in catalysis. Residue cysteine 126 is modified to 2-(S-cysteinyl)pyruvic acid O-phosphothioketal. Residues 171–174 (KVSV), aspartate 316, and isoleucine 338 each bind UDP-N-acetyl-alpha-D-glucosamine.

The protein belongs to the EPSP synthase family. MurA subfamily.

The protein resides in the cytoplasm. It carries out the reaction phosphoenolpyruvate + UDP-N-acetyl-alpha-D-glucosamine = UDP-N-acetyl-3-O-(1-carboxyvinyl)-alpha-D-glucosamine + phosphate. The protein operates within cell wall biogenesis; peptidoglycan biosynthesis. In terms of biological role, cell wall formation. Adds enolpyruvyl to UDP-N-acetylglucosamine. The chain is UDP-N-acetylglucosamine 1-carboxyvinyltransferase from Xanthobacter autotrophicus (strain ATCC BAA-1158 / Py2).